Reading from the N-terminus, the 908-residue chain is NADH-quinone oxidoreductase subunit G (908 aa).

The 82-residue stretch at 2–83 (ATIHVDGKEY…GTFISIDDEE (82 aa)) folds into the 2Fe-2S ferredoxin-type domain. [2Fe-2S] cluster-binding residues include Cys-34, Cys-45, Cys-48, and Cys-67. Positions 83–122 (EAKQFRESVVEWLMTNHPHDCPVCEEGGNCHLQDMTVMTG) constitute a 4Fe-4S His(Cys)3-ligated-type domain. Positions 99, 103, 106, 112, 151, 154, 157, 201, 228, 231, 235, and 263 each coordinate [4Fe-4S] cluster. The 4Fe-4S Mo/W bis-MGD-type domain maps to 221-277 (MQFAPSICQQCSIGCNISPGERYGELRRIENRYNGTVNHYFLCDRGRFGYGYVNLKD).

It belongs to the complex I 75 kDa subunit family. In terms of assembly, composed of 13 different subunits. Subunits NuoCD, E, F, and G constitute the peripheral sector of the complex. [2Fe-2S] cluster serves as cofactor. Requires [4Fe-4S] cluster as cofactor.

The enzyme catalyses a quinone + NADH + 5 H(+)(in) = a quinol + NAD(+) + 4 H(+)(out). In terms of biological role, NDH-1 shuttles electrons from NADH, via FMN and iron-sulfur (Fe-S) centers, to quinones in the respiratory chain. The immediate electron acceptor for the enzyme in this species is believed to be ubiquinone. Couples the redox reaction to proton translocation (for every two electrons transferred, four hydrogen ions are translocated across the cytoplasmic membrane), and thus conserves the redox energy in a proton gradient. The polypeptide is NADH-quinone oxidoreductase subunit G (nuoG) (Salmonella typhi).